A 394-amino-acid chain; its full sequence is Cell division protein FtsZ (394 aa).

Residues 21-25, 108-110, Glu-139, Arg-143, and Asp-187 each bind GTP; these read GGGGN and GTG.

It belongs to the FtsZ family. Homodimer. Polymerizes to form a dynamic ring structure in a strictly GTP-dependent manner. Interacts directly with several other division proteins. Interacts with the SulA inhibitor.

The protein resides in the cytoplasm. Its function is as follows. Essential cell division protein that forms a contractile ring structure (Z ring) at the future cell division site. The regulation of the ring assembly controls the timing and the location of cell division. One of the functions of the FtsZ ring is to recruit other cell division proteins to the septum to produce a new cell wall between the dividing cells. Binds GTP and shows GTPase activity. This is Cell division protein FtsZ from Pseudomonas aeruginosa (strain ATCC 15692 / DSM 22644 / CIP 104116 / JCM 14847 / LMG 12228 / 1C / PRS 101 / PAO1).